Reading from the N-terminus, the 199-residue chain is ATP-dependent Clp protease proteolytic subunit (199 aa).

S98 functions as the Nucleophile in the catalytic mechanism. H123 is a catalytic residue.

This sequence belongs to the peptidase S14 family. As to quaternary structure, fourteen ClpP subunits assemble into 2 heptameric rings which stack back to back to give a disk-like structure with a central cavity, resembling the structure of eukaryotic proteasomes.

It localises to the cytoplasm. It carries out the reaction Hydrolysis of proteins to small peptides in the presence of ATP and magnesium. alpha-casein is the usual test substrate. In the absence of ATP, only oligopeptides shorter than five residues are hydrolyzed (such as succinyl-Leu-Tyr-|-NHMec, and Leu-Tyr-Leu-|-Tyr-Trp, in which cleavage of the -Tyr-|-Leu- and -Tyr-|-Trp bonds also occurs).. Cleaves peptides in various proteins in a process that requires ATP hydrolysis. Has a chymotrypsin-like activity. Plays a major role in the degradation of misfolded proteins. The protein is ATP-dependent Clp protease proteolytic subunit of Ehrlichia chaffeensis (strain ATCC CRL-10679 / Arkansas).